A 298-amino-acid chain; its full sequence is Tyrosine recombinase XerC (298 aa).

Residues 2–88 (TDLHTDVERY…ALRSFFDWLV (87 aa)) form the Core-binding (CB) domain. The Tyr recombinase domain occupies 109-288 (HLPKNIDVDD…DFQHLASVYD (180 aa)). Catalysis depends on residues Arg-148, Lys-172, His-240, Arg-243, and His-266. Tyr-275 serves as the catalytic O-(3'-phospho-DNA)-tyrosine intermediate.

It belongs to the 'phage' integrase family. XerC subfamily. As to quaternary structure, forms a cyclic heterotetrameric complex composed of two molecules of XerC and two molecules of XerD, in which XerC interacts with XerD via its C-terminal region, XerD interacts with XerC via its C-terminal region and so on.

It localises to the cytoplasm. Its activity is regulated as follows. FtsK may regulate the catalytic switch between XerC and XerD in the heterotetrameric complex during the two steps of the recombination process. Its function is as follows. Site-specific tyrosine recombinase, which acts by catalyzing the cutting and rejoining of the recombining DNA molecules. Binds cooperatively to specific DNA consensus sequences that are separated from XerD binding sites by a short central region, forming the heterotetrameric XerC-XerD complex that recombines DNA substrates. The complex is essential to convert dimers of the bacterial chromosome into monomers to permit their segregation at cell division. It also contributes to the segregational stability of plasmids. In the complex XerC specifically exchanges the top DNA strands. This Escherichia coli O45:K1 (strain S88 / ExPEC) protein is Tyrosine recombinase XerC.